Consider the following 565-residue polypeptide: Laccase-12 (565 aa).

An N-terminal signal peptide occupies residues 1 to 24 (MTTVHTFSILLFFCSLFSASLIIA). 2 Plastocyanin-like domains span residues 32–148 (VIQE…PTPG) and 158–310 (RQTA…YKKT). The N-linked (GlcNAc...) asparagine glycan is linked to Asn78. 4 residues coordinate Cu cation: His82, His84, His127, and His129. N-linked (GlcNAc...) asparagine glycosylation is found at Asn187, Asn203, Asn298, Asn325, Asn377, Asn387, Asn395, and Asn428. The 137-residue stretch at 413–549 (DFPSKPPVKF…AMAFLVDNGV (137 aa)) folds into the Plastocyanin-like 3 domain. Cu cation-binding residues include His466, His469, His471, His528, Cys529, His530, and His534.

This sequence belongs to the multicopper oxidase family. The cofactor is Cu cation. As to expression, predominantly expressed in the inflorescence stem.

The protein resides in the secreted. The protein localises to the extracellular space. It is found in the apoplast. It carries out the reaction 4 hydroquinone + O2 = 4 benzosemiquinone + 2 H2O. Functionally, lignin degradation and detoxification of lignin-derived products. The chain is Laccase-12 (LAC12) from Arabidopsis thaliana (Mouse-ear cress).